The primary structure comprises 315 residues: N-acetylneuraminate lyase (315 aa).

Residues S59 and S60 each coordinate aceneuramate. Catalysis depends on Y149, which acts as the Proton donor. K177 (schiff-base intermediate with substrate) is an active-site residue. Residues S179, G202, D204, E205, and G221 each coordinate aceneuramate.

The protein belongs to the DapA family. NanA subfamily. As to quaternary structure, homotetramer.

The protein localises to the cytoplasm. The catalysed reaction is aceneuramate = aldehydo-N-acetyl-D-mannosamine + pyruvate. Its pathway is amino-sugar metabolism; N-acetylneuraminate degradation; D-fructose 6-phosphate from N-acetylneuraminate: step 1/5. In terms of biological role, catalyzes the reversible aldol cleavage of N-acetylneuraminic acid (sialic acid; Neu5Ac) to form pyruvate and N-acetylmannosamine (ManNAc) via a Schiff base intermediate. Cannot use 2,7-anhydro-Neu5Ac. Involved in the degradation of sialic acid, which is present in the host mucus layer and represents a much-coveted source of nutrients for R.gnavus, a prevalent member of the normal gut microbiota. The sequence is that of N-acetylneuraminate lyase from Mediterraneibacter gnavus (strain ATCC 29149 / DSM 114966 / JCM 6515 / VPI C7-9) (Ruminococcus gnavus).